A 318-amino-acid chain; its full sequence is Malate dehydrogenase (318 aa).

Residues 10–15 (GGGQIG) and D34 contribute to the NAD(+) site. Substrate-binding residues include R83 and R89. NAD(+) is bound by residues N96 and 119–121 (ISN). Residues N121 and R152 each contribute to the substrate site. H176 serves as the catalytic Proton acceptor.

It belongs to the LDH/MDH superfamily. MDH type 3 family.

It catalyses the reaction (S)-malate + NAD(+) = oxaloacetate + NADH + H(+). In terms of biological role, catalyzes the reversible oxidation of malate to oxaloacetate. This is Malate dehydrogenase from Geotalea uraniireducens (strain Rf4) (Geobacter uraniireducens).